We begin with the raw amino-acid sequence, 935 residues long: Inter-alpha-trypsin inhibitor heavy chain H2 (935 aa).

An N-terminal signal peptide occupies residues 1–18 (MKGLTCFLLCFLLSEAQG). A propeptide spanning residues 19-53 (FEIPTNGLSEFAEYGDLAELALGKFHVVPGNRRSQ) is cleaved from the precursor. The 130-residue stretch at 45 to 174 (VVPGNRRSQE…KVQFELHYQE (130 aa)) folds into the VIT domain. A glycan (N-linked (GlcNAc...) asparagine) is linked at Asn107. Residue Glu271 is modified to 4-carboxyglutamate. Positions 297-457 (PKNILFVIDV…YDFLKRLSND (161 aa)) constitute a VWFA domain. The N-linked (GlcNAc...) asparagine glycan is linked to Asn434. Ser455 is subject to Phosphoserine. Aspartate 1-(chondroitin 4-sulfate)-ester is present on Asp691. Residues 692 to 935 (PHFIIYLPRS…PLLYSFLKRP (244 aa)) constitute a propeptide that is removed on maturation. At Ser875 the chain carries Phosphoserine.

It belongs to the ITIH family. In terms of assembly, I-alpha-I plasma protease inhibitors are assembled from one or two heavy chains (HC) and one light chain, bikunin. Inter-alpha-inhibitor (I-alpha-I) is composed of ITIH1/HC1, ITIH2/HC2 and bikunin. In terms of processing, heavy chains are linked to bikunin via chondroitin 4-sulfate esterified to the alpha-carboxyl of the C-terminal aspartate after propeptide cleavage. Post-translationally, phosphorylated by FAM20C in the extracellular medium.

Its subcellular location is the secreted. May act as a carrier of hyaluronan in serum or as a binding protein between hyaluronan and other matrix protein, including those on cell surfaces in tissues to regulate the localization, synthesis and degradation of hyaluronan which are essential to cells undergoing biological processes. The protein is Inter-alpha-trypsin inhibitor heavy chain H2 (ITIH2) of Sus scrofa (Pig).